The following is a 685-amino-acid chain: Protein DIA2 (685 aa).

TPR repeat units follow at residues 6 to 39 (IDRSLELGIQCFQGEDYKGAAELFSKSLQLARSY), 70 to 103 (LVLLDNRAATWEKLNKLDRALADAAYMITVDAYN), and 104 to 137 (LKGYIRRGKVLQKLGRYEEALQVYENGLKQAGEA). One can recognise an F-box domain in the interval 207 to 254 (IDYIATLPVEIIERIMANMDTRSIIRCYSVCKLWKYRLERLPHLYQEF). LRR repeat units lie at residues 300–323 (ILLLSRLMIGTRQLALMAKKCKAE), 353–377 (KLNLHELYTRTTSMTHLELVLNFHT), 454–480 (MPNLQELWLERNTGIEFHELITQIVQV), 499–517 (FDRMDQSQLGLGEEALREV), 518–542 (FQSLESLDLMNTRFDPQLLLLLLQP), 562–585 (ARDLEILTLIFQQLPALTDLLLPN), and 598–622 (RKNIKGMKLKRLDLSFIPSLKGYEL).

Belongs to the DIA2 family. As to quaternary structure, forms a SCF ubiquitin ligase complex which binds to DNA replication origins.

The protein resides in the nucleus. In terms of biological role, F-box protein component of a SCF ubiquitin ligase complex involved in ubiquitin-dependent protein degradation. The SCF-DIA2 complex is specifically involved in the pheromone induced degradation of phosphorylated TEC1. Involved in DNA replication, genome stability, and the control of cell cycle, probably through its association to replication origins to facilitate the ubiquitination of another origin-binding protein. The polypeptide is Protein DIA2 (DIA2) (Eremothecium gossypii (strain ATCC 10895 / CBS 109.51 / FGSC 9923 / NRRL Y-1056) (Yeast)).